Here is a 1081-residue protein sequence, read N- to C-terminus: WD repeat-containing protein 64 (1081 aa).

WD repeat units lie at residues 102 to 152 (DPIA…ATQK), 153 to 198 (GLIT…GSSQ), 199 to 265 (ENYF…VLDS), 266 to 314 (KNFK…LEDN), 315 to 356 (LPVR…NIST), 357 to 400 (KPVG…TLSL), 401 to 444 (LQVF…TRMI), 445 to 488 (QDTK…ETGL), 489 to 532 (QVYQ…FGSG), 533 to 631 (QEMK…LIVE), 632 to 740 (RNFS…PQSS), 741 to 803 (KGSK…EGRL), 804 to 857 (LKDM…EKKF), and 858 to 895 (KQLL…RLWH). Low complexity predominate over residues 726–745 (CSSSQCESSKGPQSSKGSKQ). Residues 726-757 (CSSSQCESSKGPQSSKGSKQSIHDSEVKGEQT) form a disordered region. The segment covering 746-756 (SIHDSEVKGEQ) has biased composition (basic and acidic residues). The segment at 1036–1060 (DSSDGITGKKKGGHVQREKAPRRRS) is disordered. The span at 1043 to 1060 (GKKKGGHVQREKAPRRRS) shows a compositional bias: basic residues.

The chain is WD repeat-containing protein 64 (WDR64) from Homo sapiens (Human).